Consider the following 396-residue polypeptide: Elongation factor Tu (396 aa).

One can recognise a tr-type G domain in the interval 10–205; sequence KPHVNIGTIG…AVDESIPDPV (196 aa). The tract at residues 19 to 26 is G1; it reads GHVDHGKT. 19-26 is a binding site for GTP; sequence GHVDHGKT. Residue Thr-26 coordinates Mg(2+). Residues 62–66 form a G2 region; that stretch reads GITIN. The G3 stretch occupies residues 83–86; the sequence is DAPG. GTP contacts are provided by residues 83-87 and 138-141; these read DAPGH and NKAD. The segment at 138–141 is G4; that stretch reads NKAD. Residues 175–177 are G5; the sequence is SAL.

It belongs to the TRAFAC class translation factor GTPase superfamily. Classic translation factor GTPase family. EF-Tu/EF-1A subfamily. Monomer.

The protein localises to the cytoplasm. It carries out the reaction GTP + H2O = GDP + phosphate + H(+). In terms of biological role, GTP hydrolase that promotes the GTP-dependent binding of aminoacyl-tRNA to the A-site of ribosomes during protein biosynthesis. This Mycobacterium avium (strain 104) protein is Elongation factor Tu.